The following is a 651-amino-acid chain: Acetyl-coenzyme A synthetase (651 aa).

CoA is bound by residues 189–192, Thr-311, and Asn-335; that span reads RGGK. Residues 387-389, 411-416, Asp-500, and Arg-515 each bind ATP; these read GEP and DTWWQT. Ser-523 provides a ligand contact to CoA. Arg-526 is an ATP binding site. Mg(2+) contacts are provided by Val-537, His-539, and Val-542. Residue Arg-586 participates in CoA binding. Lys-611 is modified (N6-acetyllysine).

The protein belongs to the ATP-dependent AMP-binding enzyme family. Mg(2+) serves as cofactor. In terms of processing, acetylated. Deacetylation by the SIR2-homolog deacetylase activates the enzyme.

It catalyses the reaction acetate + ATP + CoA = acetyl-CoA + AMP + diphosphate. In terms of biological role, catalyzes the conversion of acetate into acetyl-CoA (AcCoA), an essential intermediate at the junction of anabolic and catabolic pathways. AcsA undergoes a two-step reaction. In the first half reaction, AcsA combines acetate with ATP to form acetyl-adenylate (AcAMP) intermediate. In the second half reaction, it can then transfer the acetyl group from AcAMP to the sulfhydryl group of CoA, forming the product AcCoA. The polypeptide is Acetyl-coenzyme A synthetase (Brucella suis (strain ATCC 23445 / NCTC 10510)).